A 251-amino-acid polypeptide reads, in one-letter code: MRKPIIAGNWKMNKTVGEAKAFVEEVKGAIPSSDKVDSVVCSPALFLEGLVQKAEGTELRIGAQNMHFEESGAFTGEISPVALSDMKVDYVILGHSERRDMFAETDELVNKKTHAAFAHGLTPIVCVGETLEEREANQTYDVVKTQVEKGLEGLTDEQVKVTVIAYEPVWAIGTGKSSSAEDANDVCSYIRKVVTEKFSQEAADAVRIQYGGSVKPANIAEYMAQSDIDGALVGGASLDPQSFLQLLEAVK.

Residue 9 to 11 (NWK) coordinates substrate. H95 (electrophile) is an active-site residue. E167 acts as the Proton acceptor in catalysis. Residues G173, S213, and 234 to 235 (GG) contribute to the substrate site. The residue at position 213 (S213) is a Phosphoserine.

This sequence belongs to the triosephosphate isomerase family. Homodimer.

The protein localises to the cytoplasm. It carries out the reaction D-glyceraldehyde 3-phosphate = dihydroxyacetone phosphate. The protein operates within carbohydrate biosynthesis; gluconeogenesis. It participates in carbohydrate degradation; glycolysis; D-glyceraldehyde 3-phosphate from glycerone phosphate: step 1/1. In terms of biological role, involved in the gluconeogenesis. Catalyzes stereospecifically the conversion of dihydroxyacetone phosphate (DHAP) to D-glyceraldehyde-3-phosphate (G3P). This is Triosephosphate isomerase from Halalkalibacterium halodurans (strain ATCC BAA-125 / DSM 18197 / FERM 7344 / JCM 9153 / C-125) (Bacillus halodurans).